The sequence spans 335 residues: Large ribosomal subunit protein uL3 (335 aa).

Disordered regions lie at residues 1-35 (MPQP…ADDG), 234-256 (IGNL…GQTG), and 312-335 (AVRP…SNQG). The segment covering 244–256 (RVRSTVPQQGQTG) has biased composition (polar residues).

This sequence belongs to the universal ribosomal protein uL3 family. As to quaternary structure, part of the 50S ribosomal subunit. Forms a cluster with proteins L14 and L24e.

In terms of biological role, one of the primary rRNA binding proteins, it binds directly near the 3'-end of the 23S rRNA, where it nucleates assembly of the 50S subunit. In Halobacterium salinarum (strain ATCC 29341 / DSM 671 / R1), this protein is Large ribosomal subunit protein uL3.